The sequence spans 192 residues: Fe/S biogenesis protein NfuA (192 aa).

[4Fe-4S] cluster contacts are provided by C149 and C152.

This sequence belongs to the NfuA family. As to quaternary structure, homodimer. It depends on [4Fe-4S] cluster as a cofactor.

In terms of biological role, involved in iron-sulfur cluster biogenesis. Binds a 4Fe-4S cluster, can transfer this cluster to apoproteins, and thereby intervenes in the maturation of Fe/S proteins. Could also act as a scaffold/chaperone for damaged Fe/S proteins. This Shewanella putrefaciens (strain CN-32 / ATCC BAA-453) protein is Fe/S biogenesis protein NfuA.